The following is a 253-amino-acid chain: ER membrane protein complex subunit 3 (253 aa).

3 consecutive transmembrane segments (helical) span residues 10-30 (WVLL…QYIM), 126-146 (FIPQ…FILM), and 176-196 (SISW…LIGL).

This sequence belongs to the EMC3 family. In terms of assembly, component of the ER membrane protein complex (EMC), which is composed of EMC1, EMC2, EMC3, EMC4, EMC5 and EMC6.

The protein resides in the endoplasmic reticulum membrane. Functionally, the EMC seems to be required for efficient folding of proteins in the endoplasmic reticulum (ER). This chain is ER membrane protein complex subunit 3 (AIM27), found in Saccharomyces cerevisiae (strain YJM789) (Baker's yeast).